A 223-amino-acid chain; its full sequence is uncharacterized protein (223 aa).

Residues 29 to 220 (KQTYKMFKED…AKEILKNIGD (192 aa)) form the Tyr recombinase domain. Residues R71, K103, H170, R173, and H196 contribute to the active site. Y205 serves as the catalytic O-(3'-phospho-DNA)-tyrosine intermediate.

Belongs to the 'phage' integrase family.

This is an uncharacterized protein from Methanocaldococcus jannaschii (strain ATCC 43067 / DSM 2661 / JAL-1 / JCM 10045 / NBRC 100440) (Methanococcus jannaschii).